We begin with the raw amino-acid sequence, 524 residues long: Putative mediator of RNA polymerase II transcription subunit 8 (524 aa).

2 coiled-coil regions span residues 117-146 (LKLH…SKHK) and 175-211 (NAQQ…QQQQ). Disordered regions lie at residues 312–340 (VASP…QPSI), 356–379 (LPNT…IGGG), and 430–451 (QQNQ…IQHL). Residues 314–333 (SPQQQVTSKQVPIQSTNKPL) show a composition bias toward polar residues. The segment covering 356-374 (LPNTTSPPVNNNNQSPINS) has biased composition (low complexity). Residues 398–478 (IQQQIQLQQQ…LQQQFQQQQL (81 aa)) are a coiled coil.

It belongs to the Mediator complex subunit 8 family. In terms of assembly, component of the Mediator complex. May be part of a multisubunit E3 ubiquitin-protein ligase complex.

The protein resides in the nucleus. Its pathway is protein modification; protein ubiquitination. In terms of biological role, component of the Mediator complex, a coactivator involved in the regulated transcription of nearly all RNA polymerase II-dependent genes. Mediator functions as a bridge to convey information from gene-specific regulatory proteins to the basal RNA polymerase II transcription machinery. Mediator is recruited to promoters by direct interactions with regulatory proteins and serves as a scaffold for the assembly of a functional preinitiation complex with RNA polymerase II and the general transcription factors. May play a role as a target recruitment subunit in E3 ubiquitin-protein ligase complexes and thus in ubiquitination and subsequent proteasomal degradation of target proteins. The sequence is that of Putative mediator of RNA polymerase II transcription subunit 8 (med8) from Dictyostelium discoideum (Social amoeba).